The primary structure comprises 160 residues: Putative pre-16S rRNA nuclease (160 aa).

Belongs to the YqgF nuclease family.

The protein localises to the cytoplasm. Its function is as follows. Could be a nuclease involved in processing of the 5'-end of pre-16S rRNA. The sequence is that of Putative pre-16S rRNA nuclease from Chelativorans sp. (strain BNC1).